Consider the following 125-residue polypeptide: Small ribosomal subunit protein uS13 (125 aa).

It belongs to the universal ribosomal protein uS13 family. Part of the 30S ribosomal subunit. Forms a loose heterodimer with protein S19. Forms two bridges to the 50S subunit in the 70S ribosome.

Located at the top of the head of the 30S subunit, it contacts several helices of the 16S rRNA. In the 70S ribosome it contacts the 23S rRNA (bridge B1a) and protein L5 of the 50S subunit (bridge B1b), connecting the 2 subunits; these bridges are implicated in subunit movement. Contacts the tRNAs in the A and P-sites. This is Small ribosomal subunit protein uS13 from Rickettsia prowazekii (strain Madrid E).